Consider the following 323-residue polypeptide: Elongation factor P--(R)-beta-lysine ligase (323 aa).

Residue 76–78 (SPE) coordinates substrate. Residues 100 to 102 (RNE) and Asn-109 contribute to the ATP site. Tyr-118 serves as a coordination point for substrate. 242 to 243 (EL) contacts ATP. Residue Glu-249 participates in substrate binding. Gly-298 is an ATP binding site.

Belongs to the class-II aminoacyl-tRNA synthetase family. EpmA subfamily. In terms of assembly, homodimer.

It catalyses the reaction D-beta-lysine + L-lysyl-[protein] + ATP = N(6)-((3R)-3,6-diaminohexanoyl)-L-lysyl-[protein] + AMP + diphosphate + H(+). With EpmB is involved in the beta-lysylation step of the post-translational modification of translation elongation factor P (EF-P). Catalyzes the ATP-dependent activation of (R)-beta-lysine produced by EpmB, forming a lysyl-adenylate, from which the beta-lysyl moiety is then transferred to the epsilon-amino group of a conserved specific lysine residue in EF-P. The sequence is that of Elongation factor P--(R)-beta-lysine ligase from Pasteurella multocida (strain Pm70).